The chain runs to 178 residues: Large ribosomal subunit protein uL6 (178 aa).

Positions 159 to 178 are disordered; that stretch reads GKGIRYEGEHVRRKEGKTGK.

This sequence belongs to the universal ribosomal protein uL6 family. In terms of assembly, part of the 50S ribosomal subunit.

In terms of biological role, this protein binds to the 23S rRNA, and is important in its secondary structure. It is located near the subunit interface in the base of the L7/L12 stalk, and near the tRNA binding site of the peptidyltransferase center. This is Large ribosomal subunit protein uL6 from Listeria monocytogenes serotype 4b (strain CLIP80459).